Here is a 64-residue protein sequence, read N- to C-terminus: MAKAKGARIIITLECTECRTNPAQRSPGVSRYTTTKNRRTTTGRLELKKFCRYCNKHTIHREIK.

This sequence belongs to the bacterial ribosomal protein bL33 family.

This chain is Large ribosomal subunit protein bL33, found in Thermosynechococcus vestitus (strain NIES-2133 / IAM M-273 / BP-1).